We begin with the raw amino-acid sequence, 482 residues long: UDP-N-acetylmuramoyl-L-alanyl-D-glutamate--2,6-diaminopimelate ligase 1 (482 aa).

Ser30 serves as a coordination point for UDP-N-acetyl-alpha-D-muramoyl-L-alanyl-D-glutamate. ATP is bound at residue 110 to 116 (GTNGKTT). UDP-N-acetyl-alpha-D-muramoyl-L-alanyl-D-glutamate is bound by residues 152-153 (TT), Ser179, and Arg187. Lys219 bears the N6-carboxylysine mark. Meso-2,6-diaminopimelate-binding positions include Arg378, 402 to 405 (DNPR), Gly452, and Glu456. The short motif at 402 to 405 (DNPR) is the Meso-diaminopimelate recognition motif element.

The protein belongs to the MurCDEF family. MurE subfamily. Requires Mg(2+) as cofactor. Carboxylation is probably crucial for Mg(2+) binding and, consequently, for the gamma-phosphate positioning of ATP.

The protein resides in the cytoplasm. It carries out the reaction UDP-N-acetyl-alpha-D-muramoyl-L-alanyl-D-glutamate + meso-2,6-diaminopimelate + ATP = UDP-N-acetyl-alpha-D-muramoyl-L-alanyl-gamma-D-glutamyl-meso-2,6-diaminopimelate + ADP + phosphate + H(+). Its pathway is cell wall biogenesis; peptidoglycan biosynthesis. Its function is as follows. Catalyzes the addition of meso-diaminopimelic acid to the nucleotide precursor UDP-N-acetylmuramoyl-L-alanyl-D-glutamate (UMAG) in the biosynthesis of bacterial cell-wall peptidoglycan. The polypeptide is UDP-N-acetylmuramoyl-L-alanyl-D-glutamate--2,6-diaminopimelate ligase 1 (Clostridium acetobutylicum (strain ATCC 824 / DSM 792 / JCM 1419 / IAM 19013 / LMG 5710 / NBRC 13948 / NRRL B-527 / VKM B-1787 / 2291 / W)).